The primary structure comprises 271 residues: NAD kinase (271 aa).

Catalysis depends on D64, which acts as the Proton acceptor. NAD(+)-binding positions include 64 to 65 (DG), R69, 132 to 133 (NE), K143, R160, D162, 173 to 178 (TAYAMS), A197, and Q231.

This sequence belongs to the NAD kinase family. The cofactor is a divalent metal cation.

It localises to the cytoplasm. The catalysed reaction is NAD(+) + ATP = ADP + NADP(+) + H(+). Involved in the regulation of the intracellular balance of NAD and NADP, and is a key enzyme in the biosynthesis of NADP. Catalyzes specifically the phosphorylation on 2'-hydroxyl of the adenosine moiety of NAD to yield NADP. The sequence is that of NAD kinase from Methanocorpusculum labreanum (strain ATCC 43576 / DSM 4855 / Z).